Consider the following 290-residue polypeptide: 33 kDa chaperonin (290 aa).

2 cysteine pairs are disulfide-bonded: C235/C237 and C268/C271.

Belongs to the HSP33 family. Under oxidizing conditions two disulfide bonds are formed involving the reactive cysteines. Under reducing conditions zinc is bound to the reactive cysteines and the protein is inactive.

The protein localises to the cytoplasm. In terms of biological role, redox regulated molecular chaperone. Protects both thermally unfolding and oxidatively damaged proteins from irreversible aggregation. Plays an important role in the bacterial defense system toward oxidative stress. The polypeptide is 33 kDa chaperonin (Streptococcus gordonii (strain Challis / ATCC 35105 / BCRC 15272 / CH1 / DL1 / V288)).